Reading from the N-terminus, the 428-residue chain is Kynureninase (428 aa).

Residues Thr-104, Thr-105, 132 to 135 (FPSD), Asp-213, His-216, and Tyr-238 each bind pyridoxal 5'-phosphate. Lys-239 bears the N6-(pyridoxal phosphate)lysine mark. 2 residues coordinate pyridoxal 5'-phosphate: Trp-267 and Thr-295.

Belongs to the kynureninase family. As to quaternary structure, homodimer. Pyridoxal 5'-phosphate is required as a cofactor.

The catalysed reaction is L-kynurenine + H2O = anthranilate + L-alanine + H(+). It carries out the reaction 3-hydroxy-L-kynurenine + H2O = 3-hydroxyanthranilate + L-alanine + H(+). It functions in the pathway amino-acid degradation; L-kynurenine degradation; L-alanine and anthranilate from L-kynurenine: step 1/1. Its pathway is cofactor biosynthesis; NAD(+) biosynthesis; quinolinate from L-kynurenine: step 2/3. Catalyzes the cleavage of L-kynurenine (L-Kyn) and L-3-hydroxykynurenine (L-3OHKyn) into anthranilic acid (AA) and 3-hydroxyanthranilic acid (3-OHAA), respectively. The sequence is that of Kynureninase from Bacillus cereus (strain ATCC 10987 / NRS 248).